The chain runs to 340 residues: UDP-3-O-acylglucosamine N-acyltransferase (340 aa).

Catalysis depends on histidine 237, which acts as the Proton acceptor.

Belongs to the transferase hexapeptide repeat family. LpxD subfamily. Homotrimer.

The enzyme catalyses a UDP-3-O-[(3R)-3-hydroxyacyl]-alpha-D-glucosamine + a (3R)-hydroxyacyl-[ACP] = a UDP-2-N,3-O-bis[(3R)-3-hydroxyacyl]-alpha-D-glucosamine + holo-[ACP] + H(+). It functions in the pathway bacterial outer membrane biogenesis; LPS lipid A biosynthesis. Functionally, catalyzes the N-acylation of UDP-3-O-acylglucosamine using 3-hydroxyacyl-ACP as the acyl donor. Is involved in the biosynthesis of lipid A, a phosphorylated glycolipid that anchors the lipopolysaccharide to the outer membrane of the cell. In Desulfosudis oleivorans (strain DSM 6200 / JCM 39069 / Hxd3) (Desulfococcus oleovorans), this protein is UDP-3-O-acylglucosamine N-acyltransferase.